We begin with the raw amino-acid sequence, 212 residues long: Imidazole glycerol phosphate synthase subunit HisH (212 aa).

Residues 2 to 212 (KVAVIDYGMG…KNFLAWDGNV (211 aa)) form the Glutamine amidotransferase type-1 domain. C82 (nucleophile) is an active-site residue. Active-site residues include H190 and E192.

Heterodimer of HisH and HisF.

The protein resides in the cytoplasm. The catalysed reaction is 5-[(5-phospho-1-deoxy-D-ribulos-1-ylimino)methylamino]-1-(5-phospho-beta-D-ribosyl)imidazole-4-carboxamide + L-glutamine = D-erythro-1-(imidazol-4-yl)glycerol 3-phosphate + 5-amino-1-(5-phospho-beta-D-ribosyl)imidazole-4-carboxamide + L-glutamate + H(+). The enzyme catalyses L-glutamine + H2O = L-glutamate + NH4(+). The protein operates within amino-acid biosynthesis; L-histidine biosynthesis; L-histidine from 5-phospho-alpha-D-ribose 1-diphosphate: step 5/9. Its function is as follows. IGPS catalyzes the conversion of PRFAR and glutamine to IGP, AICAR and glutamate. The HisH subunit catalyzes the hydrolysis of glutamine to glutamate and ammonia as part of the synthesis of IGP and AICAR. The resulting ammonia molecule is channeled to the active site of HisF. This Chromobacterium violaceum (strain ATCC 12472 / DSM 30191 / JCM 1249 / CCUG 213 / NBRC 12614 / NCIMB 9131 / NCTC 9757 / MK) protein is Imidazole glycerol phosphate synthase subunit HisH.